We begin with the raw amino-acid sequence, 528 residues long: Exodeoxyribonuclease 7 large subunit (528 aa).

Residues 486-528 are disordered; that stretch reads QGDRDAVIDGESSGVLPPSAAPAPTRPTPRPKPASSSDQGSLF. The segment covering 504–517 has biased composition (pro residues); the sequence is SAAPAPTRPTPRPK.

Belongs to the XseA family. Heterooligomer composed of large and small subunits.

Its subcellular location is the cytoplasm. The enzyme catalyses Exonucleolytic cleavage in either 5'- to 3'- or 3'- to 5'-direction to yield nucleoside 5'-phosphates.. Its function is as follows. Bidirectionally degrades single-stranded DNA into large acid-insoluble oligonucleotides, which are then degraded further into small acid-soluble oligonucleotides. In Caulobacter sp. (strain K31), this protein is Exodeoxyribonuclease 7 large subunit.